A 251-amino-acid polypeptide reads, in one-letter code: Pyrroloquinoline-quinone synthase (251 aa).

The protein belongs to the PqqC family.

It carries out the reaction 6-(2-amino-2-carboxyethyl)-7,8-dioxo-1,2,3,4,7,8-hexahydroquinoline-2,4-dicarboxylate + 3 O2 = pyrroloquinoline quinone + 2 H2O2 + 2 H2O + H(+). It participates in cofactor biosynthesis; pyrroloquinoline quinone biosynthesis. Ring cyclization and eight-electron oxidation of 3a-(2-amino-2-carboxyethyl)-4,5-dioxo-4,5,6,7,8,9-hexahydroquinoline-7,9-dicarboxylic-acid to PQQ. This Pseudomonas syringae pv. tomato (strain ATCC BAA-871 / DC3000) protein is Pyrroloquinoline-quinone synthase.